The sequence spans 70 residues: Sec-independent protein translocase protein TatA (70 aa).

Residues 1-21 traverse the membrane as a helical segment; the sequence is MFGLGGQELILILLIILLLFG. Residues 50 to 62 show a composition bias toward basic and acidic residues; it reads FNKVVDEPPRKTP. Residues 50-70 are disordered; it reads FNKVVDEPPRKTPENSTGSKS.

It belongs to the TatA/E family. Forms a complex with TatC.

The protein localises to the cell inner membrane. Functionally, part of the twin-arginine translocation (Tat) system that transports large folded proteins containing a characteristic twin-arginine motif in their signal peptide across membranes. TatA could form the protein-conducting channel of the Tat system. This is Sec-independent protein translocase protein TatA from Chlorobium limicola (strain DSM 245 / NBRC 103803 / 6330).